The primary structure comprises 110 residues: UPF0122 protein lmo1802 (110 aa).

The protein belongs to the UPF0122 family.

Its function is as follows. Might take part in the signal recognition particle (SRP) pathway. This is inferred from the conservation of its genetic proximity to ftsY/ffh. May be a regulatory protein. This chain is UPF0122 protein lmo1802, found in Listeria monocytogenes serovar 1/2a (strain ATCC BAA-679 / EGD-e).